The chain runs to 77 residues: Translation initiation factor IF-1, chloroplastic (77 aa).

The S1-like domain maps to 1-71; sequence MKEQKWIHEG…TRGRIIYRLR (71 aa).

This sequence belongs to the IF-1 family. In terms of assembly, component of the 30S ribosomal translation pre-initiation complex which assembles on the 30S ribosome in the order IF-2 and IF-3, IF-1 and N-formylmethionyl-tRNA(fMet); mRNA recruitment can occur at any time during PIC assembly.

It localises to the plastid. Its subcellular location is the chloroplast. In terms of biological role, one of the essential components for the initiation of protein synthesis. Stabilizes the binding of IF-2 and IF-3 on the 30S subunit to which N-formylmethionyl-tRNA(fMet) subsequently binds. Helps modulate mRNA selection, yielding the 30S pre-initiation complex (PIC). Upon addition of the 50S ribosomal subunit IF-1, IF-2 and IF-3 are released leaving the mature 70S translation initiation complex. In Garrya elliptica (Wavyleaf silktassel), this protein is Translation initiation factor IF-1, chloroplastic.